Consider the following 418-residue polypeptide: Gamma-glutamyl phosphate reductase (418 aa).

The protein belongs to the gamma-glutamyl phosphate reductase family.

The protein localises to the cytoplasm. It catalyses the reaction L-glutamate 5-semialdehyde + phosphate + NADP(+) = L-glutamyl 5-phosphate + NADPH + H(+). The protein operates within amino-acid biosynthesis; L-proline biosynthesis; L-glutamate 5-semialdehyde from L-glutamate: step 2/2. Its function is as follows. Catalyzes the NADPH-dependent reduction of L-glutamate 5-phosphate into L-glutamate 5-semialdehyde and phosphate. The product spontaneously undergoes cyclization to form 1-pyrroline-5-carboxylate. The polypeptide is Gamma-glutamyl phosphate reductase (Citrifermentans bemidjiense (strain ATCC BAA-1014 / DSM 16622 / JCM 12645 / Bem) (Geobacter bemidjiensis)).